The following is a 288-amino-acid chain: 4-diphosphocytidyl-2-C-methyl-D-erythritol kinase (288 aa).

Residue Lys-8 is part of the active site. 90–100 lines the ATP pocket; that stretch reads PVGAGLAGGSS. Asp-132 is a catalytic residue.

The protein belongs to the GHMP kinase family. IspE subfamily.

The enzyme catalyses 4-CDP-2-C-methyl-D-erythritol + ATP = 4-CDP-2-C-methyl-D-erythritol 2-phosphate + ADP + H(+). It functions in the pathway isoprenoid biosynthesis; isopentenyl diphosphate biosynthesis via DXP pathway; isopentenyl diphosphate from 1-deoxy-D-xylulose 5-phosphate: step 3/6. Its function is as follows. Catalyzes the phosphorylation of the position 2 hydroxy group of 4-diphosphocytidyl-2C-methyl-D-erythritol. The protein is 4-diphosphocytidyl-2-C-methyl-D-erythritol kinase of Chlamydia trachomatis serovar L2b (strain UCH-1/proctitis).